The sequence spans 439 residues: MATVLIVGKPNVGKSTLFNKLVRKKKAIVEDEEGVTRDPVQDIVEWYGKTFKLVDTCGVFDNPQDIISQKMKEITLNMIREADLVLFVVDGKRGITKEDESLADFLRKSNVDTILVANKAENLREFEREVKPELYSLGFGEPIPVSAEHNINLDTLLETIIKKLEEKGLDLESKPEITDAIKVAIVGRPNVGKSTLFNAILNKERALVSPIPGTTRDPVDEEVFIDGKKYVFVDTAGLRRRSRVEPRTVEKYSNYRVVDSIEKADVVVIVLDATQGITRQDQRIAGLVERRGRASVVVFNKWDLVEHREKRHDEFTKLFREKLYFIDYSPLIFTSADKGWNVDRVIDAINLAYASYTTKVPSSAINSALQKVLAFTNLPRGLKIFFGLQVDIKPPTFLFFVNSIEKIKNPQKVFLRKLIRDYVFPFEGSPIFLKFKRSR.

EngA-type G domains are found at residues 2–168 (ATVL…EEKG) and 181–357 (IKVA…ASYT). Residues 8–15 (GKPNVGKS), 55–59 (DTCGV), 118–121 (NKAE), 187–194 (GRPNVGKS), 234–238 (DTAGL), and 300–303 (NKWD) contribute to the GTP site. Residues 358–439 (TKVPSSAINS…PIFLKFKRSR (82 aa)) form the KH-like domain.

It belongs to the TRAFAC class TrmE-Era-EngA-EngB-Septin-like GTPase superfamily. EngA (Der) GTPase family. In terms of assembly, associates with the 50S ribosomal subunit.

Its function is as follows. GTPase that plays an essential role in the late steps of ribosome biogenesis. The polypeptide is GTPase Der (Thermotoga sp. (strain RQ2)).